Here is a 448-residue protein sequence, read N- to C-terminus: Probable tryptophanase (448 aa).

Lys253 is modified (N6-(pyridoxal phosphate)lysine).

It belongs to the beta-eliminating lyase family. Requires pyridoxal 5'-phosphate as cofactor.

It catalyses the reaction L-tryptophan + H2O = indole + pyruvate + NH4(+). It functions in the pathway amino-acid degradation; L-tryptophan degradation via pyruvate pathway; indole and pyruvate from L-tryptophan: step 1/1. In Halobacterium salinarum (strain ATCC 29341 / DSM 671 / R1), this protein is Probable tryptophanase.